A 69-amino-acid polypeptide reads, in one-letter code: Putative membrane protein insertion efficiency factor (69 aa).

Belongs to the UPF0161 family.

The protein resides in the cell inner membrane. In terms of biological role, could be involved in insertion of integral membrane proteins into the membrane. In Aromatoleum aromaticum (strain DSM 19018 / LMG 30748 / EbN1) (Azoarcus sp. (strain EbN1)), this protein is Putative membrane protein insertion efficiency factor.